The primary structure comprises 1173 residues: Pyruvate-flavodoxin oxidoreductase (1173 aa).

4Fe-4S ferredoxin-type domains are found at residues Asn-681 to Ile-710 and Tyr-735 to Leu-766. The [4Fe-4S] cluster site is built by Cys-690, Cys-693, Cys-696, Cys-700, Cys-744, Cys-747, Cys-750, Cys-754, Cys-810, Cys-813, and Cys-838. Over residues Gly-922 to Gly-933 the composition is skewed to basic and acidic residues. Residues Gly-922–Arg-946 form a disordered region. Cys-1075 is a binding site for [4Fe-4S] cluster.

The protein belongs to the pyruvate:ferredoxin/flavodoxin oxidoreductase family. It depends on [4Fe-4S] cluster as a cofactor.

The enzyme catalyses oxidized [flavodoxin] + pyruvate + CoA + 2 H(+) = reduced [flavodoxin] + acetyl-CoA + CO2. Its function is as follows. Oxidoreductase required for the transfer of electrons from pyruvate to flavodoxin, which reduces nitrogenase. This is Pyruvate-flavodoxin oxidoreductase (nifJ) from Enterobacter agglomerans (Erwinia herbicola).